Reading from the N-terminus, the 169-residue chain is HTH-type transcriptional regulator PchR (169 aa).

One can recognise an HTH marR-type domain in the interval 10 to 153 (YDIYVRLLHL…VLKFLEQLTS (144 aa)). The segment at residues 64–87 (NAGIARKMNLSKANVTKISTKLIK) is a DNA-binding region (H-T-H motif).

In terms of assembly, homodimer.

Its function is as follows. Represses the expression of the yvmC-cypX operon, which is involved in pulcherriminic acid biosynthesis. Also negatively regulates yvmA, yvnB and its own expression. Positively regulates yisI expression. Acts by binding specifically to a 14-bp palindromic motif, the YvmB box, which is present in the promoter region of the target genes. The protein is HTH-type transcriptional regulator PchR of Bacillus subtilis (strain 168).